Here is a 469-residue protein sequence, read N- to C-terminus: UDP-glycosyltransferase 43 (469 aa).

UDP-alpha-D-glucose contacts are provided by residues Ser280, 345–346 (WV), 363–371 (HCGWNSILE), and 385–388 (YSEQ).

This sequence belongs to the UDP-glycosyltransferase family.

Its activity is regulated as follows. Inhibited by Cu(2+) or Zn(2+). Its function is as follows. Glycosyltransferase that catalyzes the C-glucosylation of daidzein to puerarin. Shows activity with the isoflavones daidzein and genistein, but has no activity towards flavonoids such as 2-hydroxynaringenin. Can use UDP-glucose, but not UDP-galactose or UDP-glucuronic acid as sugar donor. Does not require bivalent cations for activity. The chain is UDP-glycosyltransferase 43 from Pueraria montana var. lobata (Kudzu vine).